A 395-amino-acid chain; its full sequence is S-adenosylmethionine synthase (395 aa).

An ATP-binding site is contributed by His14. Asp16 lines the Mg(2+) pocket. Glu42 serves as a coordination point for K(+). 2 residues coordinate L-methionine: Glu55 and Gln98. The tract at residues 98–108 is flexible loop; sequence QSPDIALGVDK. Residues 174–176, 240–241, Asp249, 255–256, Ala272, and Lys276 contribute to the ATP site; these read DGK, RF, and RK. Asp249 contacts L-methionine. Lys280 is an L-methionine binding site.

This sequence belongs to the AdoMet synthase family. As to quaternary structure, homotetramer; dimer of dimers. The cofactor is Mg(2+). It depends on K(+) as a cofactor.

It is found in the cytoplasm. The enzyme catalyses L-methionine + ATP + H2O = S-adenosyl-L-methionine + phosphate + diphosphate. It participates in amino-acid biosynthesis; S-adenosyl-L-methionine biosynthesis; S-adenosyl-L-methionine from L-methionine: step 1/1. In terms of biological role, catalyzes the formation of S-adenosylmethionine (AdoMet) from methionine and ATP. The overall synthetic reaction is composed of two sequential steps, AdoMet formation and the subsequent tripolyphosphate hydrolysis which occurs prior to release of AdoMet from the enzyme. The polypeptide is S-adenosylmethionine synthase (Thermotoga maritima (strain ATCC 43589 / DSM 3109 / JCM 10099 / NBRC 100826 / MSB8)).